A 1032-amino-acid polypeptide reads, in one-letter code: Probable ATP-dependent RNA helicase DDX46 (1032 aa).

The span at 1–24 shows a compositional bias: basic residues; the sequence is MGRESRHYRKRSASRGRSGSRSRS. Residues 1-227 form a disordered region; that stretch reads MGRESRHYRK…NEMEDEELDP (227 aa). Gly2 is lipidated: N-myristoyl glycine. Residues 26-49 show a composition bias toward basic and acidic residues; the sequence is SPSDKRSKRGDDRRSRSRDRDRRR. Composition is skewed to basic residues over residues 50–73 and 81–103; these read ERSR…RSRS and ERRR…RRSR. Residues 112–200 are compositionally biased toward basic and acidic residues; that stretch reads KKAENRSRSK…EMKQGKKWSL (89 aa). Positions 152 to 197 form a coiled coil; that stretch reads DQNKLEEEMRKRKERVEKWREEQRKKAMENIGELKKEIEEMKQGKK. Lys186 participates in a covalent cross-link: Glycyl lysine isopeptide (Lys-Gly) (interchain with G-Cter in SUMO2). The residue at position 199 (Ser199) is a Phosphoserine. The span at 201–211 shows a compositional bias: acidic residues; it reads EDDDDDEDDPA. At Lys263 the chain carries N6-acetyllysine. Tyr294 carries the phosphotyrosine modification. A phosphoserine mark is found at Ser295 and Ser296. A Glycyl lysine isopeptide (Lys-Gly) (interchain with G-Cter in SUMO2) cross-link involves residue Lys325. Ser346 carries the post-translational modification Phosphoserine. A Q motif motif is present at residues 372–400; it reads KSWVQCGISMKILNSLKKHGYEKPTPIQT. Residues 403 to 581 enclose the Helicase ATP-binding domain; it reads IPAIMSGRDL…RRILSKPIEV (179 aa). The DEAD box signature appears at 529–532; it reads DEAD. In terms of domain architecture, Helicase C-terminal spans 592-753; sequence DVEQQVIVIE…AVPPDLEKLW (162 aa). At Lys776 the chain carries N6-acetyllysine. Residue Lys779 forms a Glycyl lysine isopeptide (Lys-Gly) (interchain with G-Cter in SUMO2) linkage. Ser804 is modified (phosphoserine). N6-acetyllysine is present on Lys904. Residues Lys908 and Lys916 each participate in a glycyl lysine isopeptide (Lys-Gly) (interchain with G-Cter in SUMO2) cross-link. At Ser929 the chain carries Phosphoserine.

Belongs to the DEAD box helicase family. DDX46/PRP5 subfamily. Component of the 17S U2 SnRNP complex, a ribonucleoprotein complex that contains small nuclear RNA (snRNA) U2 and a number of specific proteins. Within the 17S U2 SnRNP complex, DDX46 is part of the SF3B subcomplex, which is required for 'A' complex assembly formed by the stable binding of U2 snRNP to the branchpoint sequence in pre-mRNA. Recruited to the 17S U2 SnRNP complex following release of DDX42; DDX42 and DDX46 bind the SF3B subcomplex in a competitive manner.

The protein resides in the nucleus speckle. The protein localises to the nucleus. Its subcellular location is the cajal body. It catalyses the reaction ATP + H2O = ADP + phosphate + H(+). Functionally, component of the 17S U2 SnRNP complex of the spliceosome, a large ribonucleoprotein complex that removes introns from transcribed pre-mRNAs. The 17S U2 SnRNP complex (1) directly participates in early spliceosome assembly and (2) mediates recognition of the intron branch site during pre-mRNA splicing by promoting the selection of the pre-mRNA branch-site adenosine, the nucleophile for the first step of splicing. Within the 17S U2 SnRNP complex, DDX46 plays essential roles during assembly of pre-spliceosome and proofreading of the branch site. This chain is Probable ATP-dependent RNA helicase DDX46 (Ddx46), found in Rattus norvegicus (Rat).